The primary structure comprises 147 residues: Augurin (147 aa).

Residues 1-31 form the signal peptide; the sequence is MANSSARPAFLVMTALALLLLLCVGPGGISG. 2 consecutive propeptides follow at residues 32 to 68 and 132 to 147; these read NKLKLLLRKREAPAPTMTPVAVQESRAKEFLSSLRRP and SAHSFRHGASVNYDDY.

The protein belongs to the augurin family.

Its subcellular location is the secreted. The protein resides in the cytoplasm. The protein localises to the apical cell membrane. Functionally, probable hormone that may attenuate cell proliferation and induce senescence of oligodendrocyte and neural precursor cells in the central nervous system. ECRG4-induced senescence is characterized by G1 arrest, RB1 dephosphorylation and accelerated CCND1 and CCND3 proteasomal degradation. The polypeptide is Augurin (Bos taurus (Bovine)).